The sequence spans 166 residues: Large ribosomal subunit protein uL11 (166 aa).

The protein belongs to the universal ribosomal protein uL11 family.

Its function is as follows. This protein binds directly to 26S ribosomal RNA. The sequence is that of Large ribosomal subunit protein uL11 (RPL12) from Prunus armeniaca (Apricot).